The chain runs to 269 residues: Expansin-B1 (269 aa).

A signal peptide spans 1 to 24; the sequence is MGSLANNIMVVGAVLAALVAGGSC. N-linked (GlcNAc...) asparagine glycosylation occurs at N34. Residues 63-169 form the Expansin-like EG45 domain; that stretch reads GGACGIKNVN…RRVRCKYPAG (107 aa). 3 disulfides stabilise this stretch: C66-C94, C97-C164, and C102-C108. Residues 183 to 264 form the Expansin-like CBD domain; that stretch reads NYLAVLVKYV…NWRPDAVYTS (82 aa).

The protein belongs to the expansin family. Expansin B subfamily. As to expression, expressed in anthers and pollen.

The protein resides in the secreted. Its subcellular location is the cell wall. The protein localises to the membrane. May aid fertilization by loosening the cell wall of the stigma and style, thereby facilitating penetration of the pollen tube. Acts selectively on grass cell walls, which are relatively poor in pectins and xyloglucans and rich in glucuronoarabinoxylans and (1-3),(1-4)-beta-D-glucans, when compared with cell walls of other angiosperms, including other monocots. This chain is Expansin-B1 (EXPB1), found in Zea mays (Maize).